A 507-amino-acid chain; its full sequence is GMP synthase [glutamine-hydrolyzing] (507 aa).

Positions 4–193 (KIIILDFGSQ…VVDVCGCKQD (190 aa)) constitute a Glutamine amidotransferase type-1 domain. The Nucleophile role is filled by Cys79. Catalysis depends on residues His167 and Glu169. Residues 194–382 (WSPASFIEST…LGMPEHLITR (189 aa)) enclose the GMPS ATP-PPase domain. Residue 221–227 (SGGVDSS) participates in ATP binding.

As to quaternary structure, homodimer.

The enzyme catalyses XMP + L-glutamine + ATP + H2O = GMP + L-glutamate + AMP + diphosphate + 2 H(+). It participates in purine metabolism; GMP biosynthesis; GMP from XMP (L-Gln route): step 1/1. Functionally, catalyzes the synthesis of GMP from XMP. This is GMP synthase [glutamine-hydrolyzing] from Bacteroides fragilis (strain ATCC 25285 / DSM 2151 / CCUG 4856 / JCM 11019 / LMG 10263 / NCTC 9343 / Onslow / VPI 2553 / EN-2).